The primary structure comprises 953 residues: ALS2 C-terminal-like protein (953 aa).

MORN repeat units lie at residues 358–380 (YEGE…DGRN), 381–403 (HVGN…QASE), 409–431 (YKCH…TDEV), 432–452 (YKGY…SGPQ), 459–479 (YTGH…DGDR), 483–505 (YIGM…AGVC), 506–528 (YQGT…DDSL), and 529–552 (YEGT…NGFT). In terms of domain architecture, VPS9 spans 796 to 942 (LFPDTQLLEF…IQKEDMRLHR (147 aa)).

In terms of assembly, homodimer. Forms a heteromeric complex with ALS2. Interacts with ALS2 and RAB5A. As to expression, expressed in heart and kidney.

The protein localises to the cytoplasm. In terms of biological role, acts as a guanine nucleotide exchange factor (GEF) for Rab5 GTPase. Regulates the ALS2-mediated endosome dynamics. In Homo sapiens (Human), this protein is ALS2 C-terminal-like protein (ALS2CL).